The sequence spans 338 residues: MLGIRAMLVMLDYYWIQLITNNGTRSNNTDTIFVSLLTGPNGVTRTAIGGLYSNYTNLTGAFGFTSTNMSATNSSAEDNWSVTNLTESCINRGESYVTTIWLLDCTKNDTYWYYGNAYNHTCEGTISGYLLGMCKLWKSWVNNITSYNTVRVESLGNETRCMLLPRQYTLNATVEWYNKSEGDVPEEFMDYVILTPLAVLTCGLQEAYILDKGRRYMYLFSVSCVGITGTVSIILVSLSLLILICYYRCGRLLICPRGFELLPEFTEEEEEKEKLLTHNDIEVQVPIRTRRLLVPWIRESKMWVLPPPLPPRPPHLIEFPPSPPPSPGPMHMVVCMPA.

Over 26-223 (SNNTDTIFVS…RRYMYLFSVS (198 aa)) the chain is Lumenal. 12 N-linked (GlcNAc...) asparagine; by host glycosylation sites follow: Asn-27, Asn-54, Asn-57, Asn-68, Asn-73, Asn-79, Asn-84, Asn-108, Asn-119, Asn-143, Asn-171, and Asn-178. Residues 224-244 (CVGITGTVSIILVSLSLLILI) traverse the membrane as a helical segment. The Cytoplasmic segment spans residues 245–338 (CYYRCGRLLI…PMHMVVCMPA (94 aa)).

It belongs to the HHV-5 UL20 protein family.

It localises to the host endoplasmic reticulum membrane. This chain is Membrane protein UL20 (UL20), found in Human cytomegalovirus (strain Merlin) (HHV-5).